The following is a 195-amino-acid chain: Imidazoleglycerol-phosphate dehydratase (195 aa).

Belongs to the imidazoleglycerol-phosphate dehydratase family.

Its subcellular location is the cytoplasm. It catalyses the reaction D-erythro-1-(imidazol-4-yl)glycerol 3-phosphate = 3-(imidazol-4-yl)-2-oxopropyl phosphate + H2O. The protein operates within amino-acid biosynthesis; L-histidine biosynthesis; L-histidine from 5-phospho-alpha-D-ribose 1-diphosphate: step 6/9. The protein is Imidazoleglycerol-phosphate dehydratase of Hydrogenovibrio crunogenus (strain DSM 25203 / XCL-2) (Thiomicrospira crunogena).